Here is a 471-residue protein sequence, read N- to C-terminus: A-type ATP synthase subunit B (471 aa).

This sequence belongs to the ATPase alpha/beta chains family. As to quaternary structure, has multiple subunits with at least A(3), B(3), C, D, E, F, H, I and proteolipid K(x).

The protein localises to the cell membrane. In terms of biological role, component of the A-type ATP synthase that produces ATP from ADP in the presence of a proton gradient across the membrane. The B chain is a regulatory subunit. This Ignicoccus hospitalis (strain KIN4/I / DSM 18386 / JCM 14125) protein is A-type ATP synthase subunit B.